The primary structure comprises 911 residues: Protein translocase subunit SecA (911 aa).

ATP is bound by residues Gln-87, 105–109, and Asp-512; that span reads GEGKT. The segment at 861–880 is disordered; it reads APGLGSEQLSEEGAEVAVAS. Zn(2+)-binding residues include Cys-895, Cys-897, Cys-906, and His-907.

This sequence belongs to the SecA family. In terms of assembly, monomer and homodimer. Part of the essential Sec protein translocation apparatus which comprises SecA, SecYEG and auxiliary proteins SecDF-YajC and YidC. Requires Zn(2+) as cofactor.

It localises to the cell inner membrane. It is found in the cytoplasm. It catalyses the reaction ATP + H2O + cellular proteinSide 1 = ADP + phosphate + cellular proteinSide 2.. In terms of biological role, part of the Sec protein translocase complex. Interacts with the SecYEG preprotein conducting channel. Has a central role in coupling the hydrolysis of ATP to the transfer of proteins into and across the cell membrane, serving both as a receptor for the preprotein-SecB complex and as an ATP-driven molecular motor driving the stepwise translocation of polypeptide chains across the membrane. The chain is Protein translocase subunit SecA from Pseudomonas putida (strain ATCC 47054 / DSM 6125 / CFBP 8728 / NCIMB 11950 / KT2440).